Reading from the N-terminus, the 243-residue chain is tRNA (guanine-N(1)-)-methyltransferase (243 aa).

Residues Gly-112 and 131–136 each bind S-adenosyl-L-methionine; that span reads LGDYVL.

The protein belongs to the RNA methyltransferase TrmD family. As to quaternary structure, homodimer.

It is found in the cytoplasm. It catalyses the reaction guanosine(37) in tRNA + S-adenosyl-L-methionine = N(1)-methylguanosine(37) in tRNA + S-adenosyl-L-homocysteine + H(+). In terms of biological role, specifically methylates guanosine-37 in various tRNAs. In Leuconostoc mesenteroides subsp. mesenteroides (strain ATCC 8293 / DSM 20343 / BCRC 11652 / CCM 1803 / JCM 6124 / NCDO 523 / NBRC 100496 / NCIMB 8023 / NCTC 12954 / NRRL B-1118 / 37Y), this protein is tRNA (guanine-N(1)-)-methyltransferase.